Here is a 292-residue protein sequence, read N- to C-terminus: Short chain dehydrogenase/reductase CPUR_05418 (292 aa).

Isoleucine 44 and arginine 156 together coordinate NADP(+). Catalysis depends on proton donor residues serine 172 and tyrosine 186. NADP(+) contacts are provided by tyrosine 186, lysine 190, isoleucine 221, and threonine 223. Lysine 190 (lowers pKa of active site Tyr) is an active-site residue.

The protein belongs to the short-chain dehydrogenases/reductases (SDR) family.

It functions in the pathway secondary metabolite biosynthesis. Functionally, short chain dehydrogenase/reductase; part of the ergochrome gene cluster responsible for the typical purple-black color of the ergot sclerotia. The ergochrome gene cluster produces several ergot pigments including the yellow ergochrome secalonic acid and its derivatives, as well as the red anthraquinones endocrocin and clavorubin. The pathway begins with the synthesis of atrochrysone thioester by the polyketide synthase (PKS) CPUR_05437. The atrochrysone carboxyl ACP thioesterase CPUR_05436 then breaks the thioester bond and releases the atrochrysone carboxylic acid from CPUR_05437. The atrochrysone carboxylic acid is then converted to atrochrysone which is further transformed into emodin anthrone. The next step is performed by the anthrone oxygenase CPUR_05434 that catalyzes the oxidation of emodinanthrone to emodin. Emodin is further modified to yield monodictyphenone via several steps involving CPUR_05427, CPUR_05428, CPUR_05429 and CPUR_05430. The short chain dehydrogenase/reductase CPUR_05418 then catalyzes the C-5 ketoreduction to give the xanthone skeleton of the monomeric units. Ergochromes formation requires further dimerization steps of different xanthone units, probably catalyzed by the cytochrome P450 monooxygenase CPUR_05419. CPUR_05425, CPUR_05426 and CPUR_05431 are unique to Claviceps, thus it is likely that they are involved in further modification of xanthone units or in their dimerization. The yellow ergochromes and the red anthraquinone pigments endocrocin and clavorubin are products from the same PKS derived precursors and the latter are likely shunt products in the pathway of xanthone biosynthesis. It is proposed that atrochrysone carboxylic acid released from the PKS CPUR_05437 can also be converted to endocrocin anthrone which is further oxidized into endocrocin by CPUR_05435. Endocrocin could be then modified to clavorubin, possibly by CPUR_05423 and CPUR_05431. Clavorubin is the principal anthraquinone metabolite produced by the cluster with a much higher yield compared to endocrocin. The polypeptide is Short chain dehydrogenase/reductase CPUR_05418 (Claviceps purpurea (strain 20.1) (Ergot fungus)).